We begin with the raw amino-acid sequence, 386 residues long: Orphan methyltransferase M.SssI (386 aa).

Positions 11–386 constitute an SAM-dependent MTase C5-type domain; sequence LRVFEAFAGI…LEAIIDKIGG (376 aa). Cysteine 141 is an active-site residue.

Belongs to the class I-like SAM-binding methyltransferase superfamily. C5-methyltransferase family.

It carries out the reaction a 2'-deoxycytidine in DNA + S-adenosyl-L-methionine = a 5-methyl-2'-deoxycytidine in DNA + S-adenosyl-L-homocysteine + H(+). Its function is as follows. This de novo methylase acts completely and exclusively on CG residues in DNA; methylates unmethylated and hemi-methylated DNA. The protein is Orphan methyltransferase M.SssI (sssIM) of Spiroplasma monobiae (strain ATCC 33825 / MQ-1).